A 360-amino-acid polypeptide reads, in one-letter code: Phospho-N-acetylmuramoyl-pentapeptide-transferase (360 aa).

The next 10 membrane-spanning stretches (helical) occupy residues 21–41, 73–93, 94–114, 132–152, 168–188, 199–219, 239–259, 263–283, 288–308, and 338–358; these read YITV…LWIG, TMGG…WANL, ANPY…IGFV, WKYF…YWLG, IMPQ…VGTG, GLAI…AWAT, VVVF…FNTY, VFMG…VAIL, FLLV…ILQV, and VIIR…VTLK.

This sequence belongs to the glycosyltransferase 4 family. MraY subfamily. Requires Mg(2+) as cofactor.

The protein localises to the cell inner membrane. The enzyme catalyses UDP-N-acetyl-alpha-D-muramoyl-L-alanyl-gamma-D-glutamyl-meso-2,6-diaminopimeloyl-D-alanyl-D-alanine + di-trans,octa-cis-undecaprenyl phosphate = di-trans,octa-cis-undecaprenyl diphospho-N-acetyl-alpha-D-muramoyl-L-alanyl-D-glutamyl-meso-2,6-diaminopimeloyl-D-alanyl-D-alanine + UMP. Its pathway is cell wall biogenesis; peptidoglycan biosynthesis. Its function is as follows. Catalyzes the initial step of the lipid cycle reactions in the biosynthesis of the cell wall peptidoglycan: transfers peptidoglycan precursor phospho-MurNAc-pentapeptide from UDP-MurNAc-pentapeptide onto the lipid carrier undecaprenyl phosphate, yielding undecaprenyl-pyrophosphoryl-MurNAc-pentapeptide, known as lipid I. This chain is Phospho-N-acetylmuramoyl-pentapeptide-transferase, found in Haemophilus influenzae (strain PittEE).